The primary structure comprises 275 residues: Diaminopimelate epimerase (275 aa).

2 residues coordinate substrate: Asn20 and Asn63. Residue Cys72 is the Proton donor of the active site. Residues 73-74, Asn179, and 197-198 contribute to the substrate site; these read GN and ER. Cys207 serves as the catalytic Proton acceptor. Residue 208 to 209 participates in substrate binding; the sequence is GT.

Belongs to the diaminopimelate epimerase family. Homodimer.

It localises to the cytoplasm. It catalyses the reaction (2S,6S)-2,6-diaminopimelate = meso-2,6-diaminopimelate. It participates in amino-acid biosynthesis; L-lysine biosynthesis via DAP pathway; DL-2,6-diaminopimelate from LL-2,6-diaminopimelate: step 1/1. Catalyzes the stereoinversion of LL-2,6-diaminopimelate (L,L-DAP) to meso-diaminopimelate (meso-DAP), a precursor of L-lysine and an essential component of the bacterial peptidoglycan. The protein is Diaminopimelate epimerase of Chlamydia trachomatis serovar L2 (strain ATCC VR-902B / DSM 19102 / 434/Bu).